A 445-amino-acid polypeptide reads, in one-letter code: MCPRPGPPLGLWLLLGFACAAHLVGAPPRLCDVLWVLQEERDQCLQELERERLGEEQPVPGCQGLWDNVSCWPSSAPGRMVELECPRFLRMLTNSNGSLFRNCTQDGWTETFPRPDLACGVSMNDSSHERQHAYLLKLKVMYTVGYSSSLVMLLVALGILCAFRRLHCTRNYIHMHLFLSFILRALSNFIKDAVLFSSDDAIHCDAHRVGCKLVMVFFQYCIMANYAWLLVEGLYLHSLLVVSFFSERKCLQGFVVLGWGSPAMFVTSWAVTRHFLEDSGCWDINANAAIWWVIRGPVILSILINFILFINILRILTRKLRTQETRGQDMNHYKRLARSTLLLIPLFGVHYIVFVFSPEGAMEIQLFFELALGSFQGLVVAVLYCFLNGEVQLEVQKKWQQWHLWEPPLCPVALSSSFSNGTSSLNSTKACPSGRSRDTCKVSII.

An N-terminal signal peptide occupies residues methionine 1–alanine 21. The Extracellular segment spans residues histidine 22–lysine 137. Intrachain disulfides connect cysteine 44–cysteine 71, cysteine 62–cysteine 103, and cysteine 85–cysteine 119. Residues asparagine 68, asparagine 96, asparagine 102, and asparagine 124 are each glycosylated (N-linked (GlcNAc...) asparagine). A helical transmembrane segment spans residues leucine 138–phenylalanine 163. Over arginine 164–arginine 170 the chain is Cytoplasmic. Residues asparagine 171–lysine 191 traverse the membrane as a helical segment. The Extracellular segment spans residues aspartate 192–lysine 212. Cysteine 211 and cysteine 281 are disulfide-bonded. The helical transmembrane segment at leucine 213–tyrosine 235 threads the bilayer. At leucine 236–cysteine 250 the chain is on the cytoplasmic side. The chain crosses the membrane as a helical span at residues leucine 251–threonine 272. At arginine 273 to asparagine 287 the chain is on the extracellular side. Residues alanine 288–asparagine 311 form a helical membrane-spanning segment. Residues isoleucine 312 to leucine 336 are Cytoplasmic-facing. The chain crosses the membrane as a helical span at residues alanine 337–isoleucine 352. Residues valine 353 to glutamate 363 lie on the Extracellular side of the membrane. A helical transmembrane segment spans residues isoleucine 364–leucine 387. Residues asparagine 388 to isoleucine 445 lie on the Cytoplasmic side of the membrane.

It belongs to the G-protein coupled receptor 2 family. Post-translationally, phosphorylated on Ser and Thr residues at the cytoplasmic C-terminus by G protein-coupled receptor kinases (GRKs).

It localises to the cell membrane. Its subcellular location is the basolateral cell membrane. G protein-coupled receptor activated by secretin (SCT), which is involved in different processes such as regulation of the pH of the duodenal content, food intake and water homeostasis. Ligand binding causes a conformation change that triggers signaling via guanine nucleotide-binding proteins (G proteins) and activates cAMP-dependent pathway. Upon binding to secretin, regulates the pH of the duodenum by (1) inhibiting the secretion of gastric acid from the parietal cells of the stomach and (2) stimulating the production of bicarbonate (NaHCO(3)) from the ductal cells of the pancreas. In addition to regulating the pH of the duodenal content, plays a central role in diet induced thermogenesis: acts as a non-sympathetic brown fat (BAT) activator mediating prandial thermogenesis, which consequentially induces satiation. Mechanistically, secretin released by the gut after a meal binds to secretin receptor (SCTR) in brown adipocytes, activating brown fat thermogenesis by stimulating lipolysis, which is sensed in the brain and promotes satiation. Also able to stimulate lipolysis in white adipocytes. Also plays an important role in cellular osmoregulation by regulating renal water reabsorption. Also plays a role in the central nervous system: required for synaptic plasticity. The protein is Secretin receptor (SCTR) of Oryctolagus cuniculus (Rabbit).